The chain runs to 142 residues: Ribonuclease VapC25 (142 aa).

The PINc domain maps to 3–139 (LIDVNVLLAA…ARFASVRHIR (137 aa)). Residues Asp5 and Asp108 each coordinate Mg(2+).

The protein belongs to the PINc/VapC protein family. Mg(2+) serves as cofactor.

In terms of biological role, toxic component of a type II toxin-antitoxin (TA) system. An RNase. Upon expression in M.smegmatis inhibits colony formation. Its toxic effect is neutralized by coexpression with cognate antitoxin VapB25. The sequence is that of Ribonuclease VapC25 from Mycobacterium tuberculosis (strain ATCC 25618 / H37Rv).